The sequence spans 432 residues: Adenosine 3'-phospho 5'-phosphosulfate transporter 1 (432 aa).

Helical transmembrane passes span 5–25 (WWAV…ETPE), 40–60 (VVNA…VQYF), 109–129 (ALKL…WGVL), 154–174 (FLVL…CVLC), 238–258 (WEYL…LSSG), 265–285 (PATT…DSFT), 299–319 (SVQM…GSLL), 353–373 (LFIF…IMTL), and 387–407 (GHTV…ALLL). A Phosphoserine modification is found at Ser-427.

The protein belongs to the nucleotide-sugar transporter family. SLC35B subfamily. As to expression, highly expressed in the placenta, pancreas, mammary gland and skeletal muscle. Weakly or not expressed in colon, heart and prostate. Expressed in the brain, predominantly in frontal lobe gray matter, subcortical frontal white matter and cerebellum.

The protein resides in the golgi apparatus membrane. It catalyses the reaction 3'-phosphoadenylyl sulfate(in) + adenosine 3',5'-bisphosphate(out) = 3'-phosphoadenylyl sulfate(out) + adenosine 3',5'-bisphosphate(in). In terms of biological role, probably functions as a 3'-phosphoadenylyl sulfate:adenosine 3',5'-bisphosphate antiporter at the Golgi membranes. Mediates the transport from the cytosol into the lumen of the Golgi of 3'-phosphoadenylyl sulfate/adenosine 3'-phospho 5'-phosphosulfate (PAPS), a universal sulfuryl donor for sulfation events that take place in that compartment. This chain is Adenosine 3'-phospho 5'-phosphosulfate transporter 1, found in Homo sapiens (Human).